A 513-amino-acid chain; its full sequence is MAVHQEKLYPNCDSGVWLRSCEEEVTEPLEGTITGEIPSWLQGSLLRNGPGSLKVGSMRFEHLFDSSALLHRFAINDGSVTYQCRFLQSNTFKKNRAAERIVVTEFGTRAVPDPCHTIFDRVAALFKPGESLSDNAMISLYPFGDEIYAFTEGPVIHRIDPETLDTLERRNLMDSVSLVNHTSHPHVMPNGDVYNLGMSIVQGRLKHVIVKFPYTEKGDMFAKAHIVANMSPRWPLHPAYMHTFGITENYFVIVEQPLSVSLLTMVKSQPSNEPLASSLHWYPNHETHIVLLSRRDGKEVKRYRTEPLFYLHIINAYEHDGVLVVDLCAYKDAKAIDAMYINAIETMQSNADYAEWFRGRPKRLELPLNATNCSRIEPRLLAQLGCETPRIHYDLYNGRPYRYFYAISSDVDAANPGTIIKVDTKTGETKTWCDTNCYPSEPIFVPAPGATEEDDGVILSALVWGGAGAHCRRVALLVLEARGLRELARATFCAPSPVPKCLHGWFLPRRTQL.

Residues histidine 184, histidine 242, histidine 312, and histidine 503 each coordinate Fe cation.

The protein belongs to the carotenoid oxygenase family. The cofactor is Fe(2+).

It carries out the reaction all-trans-zeaxanthin + O2 = (3R)-11-cis-3-hydroxyretinal + (3R)-all-trans-3-hydroxyretinal. Its pathway is cofactor metabolism; retinol metabolism. Catalyzes the oxidative cleavage at the 15,15'-double bond of carotenoids and the simultaneous all-trans to 11-cis isomerization of one cleavage product. Carotenoids like 11-cis retinal can promote visual pigment biogenesis in the dark. Essential for the biosynthesis of the 3-hydroxyretinal chromophore of rhodopsin from zeaxanthin and for proper photoreceptor development. This Galleria mellonella (Greater wax moth) protein is Carotenoid isomerooxygenase (ninaB).